Consider the following 173-residue polypeptide: Crossover junction endodeoxyribonuclease RuvC (173 aa).

Residues Asp8, Glu67, and Asp139 contribute to the active site. Mg(2+) contacts are provided by Asp8, Glu67, and Asp139.

Belongs to the RuvC family. In terms of assembly, homodimer which binds Holliday junction (HJ) DNA. The HJ becomes 2-fold symmetrical on binding to RuvC with unstacked arms; it has a different conformation from HJ DNA in complex with RuvA. In the full resolvosome a probable DNA-RuvA(4)-RuvB(12)-RuvC(2) complex forms which resolves the HJ. The cofactor is Mg(2+).

The protein resides in the cytoplasm. The enzyme catalyses Endonucleolytic cleavage at a junction such as a reciprocal single-stranded crossover between two homologous DNA duplexes (Holliday junction).. Functionally, the RuvA-RuvB-RuvC complex processes Holliday junction (HJ) DNA during genetic recombination and DNA repair. Endonuclease that resolves HJ intermediates. Cleaves cruciform DNA by making single-stranded nicks across the HJ at symmetrical positions within the homologous arms, yielding a 5'-phosphate and a 3'-hydroxyl group; requires a central core of homology in the junction. The consensus cleavage sequence is 5'-(A/T)TT(C/G)-3'. Cleavage occurs on the 3'-side of the TT dinucleotide at the point of strand exchange. HJ branch migration catalyzed by RuvA-RuvB allows RuvC to scan DNA until it finds its consensus sequence, where it cleaves and resolves the cruciform DNA. This Photorhabdus laumondii subsp. laumondii (strain DSM 15139 / CIP 105565 / TT01) (Photorhabdus luminescens subsp. laumondii) protein is Crossover junction endodeoxyribonuclease RuvC.